We begin with the raw amino-acid sequence, 423 residues long: Serine--tRNA ligase (423 aa).

Residue 231–233 (TGE) participates in L-serine binding. 262 to 264 (RSE) is a binding site for ATP. Glu285 contributes to the L-serine binding site. 349-352 (EISS) contributes to the ATP binding site. Ser385 serves as a coordination point for L-serine.

It belongs to the class-II aminoacyl-tRNA synthetase family. Type-1 seryl-tRNA synthetase subfamily. Homodimer. The tRNA molecule binds across the dimer.

The protein localises to the cytoplasm. It catalyses the reaction tRNA(Ser) + L-serine + ATP = L-seryl-tRNA(Ser) + AMP + diphosphate + H(+). It carries out the reaction tRNA(Sec) + L-serine + ATP = L-seryl-tRNA(Sec) + AMP + diphosphate + H(+). The protein operates within aminoacyl-tRNA biosynthesis; selenocysteinyl-tRNA(Sec) biosynthesis; L-seryl-tRNA(Sec) from L-serine and tRNA(Sec): step 1/1. Functionally, catalyzes the attachment of serine to tRNA(Ser). Is also able to aminoacylate tRNA(Sec) with serine, to form the misacylated tRNA L-seryl-tRNA(Sec), which will be further converted into selenocysteinyl-tRNA(Sec). The protein is Serine--tRNA ligase of Coxiella burnetii (strain CbuG_Q212) (Coxiella burnetii (strain Q212)).